We begin with the raw amino-acid sequence, 310 residues long: tRNA pseudouridine synthase B (310 aa).

Asp-37 (nucleophile) is an active-site residue.

This sequence belongs to the pseudouridine synthase TruB family. Type 1 subfamily.

It carries out the reaction uridine(55) in tRNA = pseudouridine(55) in tRNA. In terms of biological role, responsible for synthesis of pseudouridine from uracil-55 in the psi GC loop of transfer RNAs. In Deinococcus deserti (strain DSM 17065 / CIP 109153 / LMG 22923 / VCD115), this protein is tRNA pseudouridine synthase B.